A 547-amino-acid polypeptide reads, in one-letter code: Chaperonin GroEL (547 aa).

ATP-binding positions include 30–33, Lys-51, 87–91, Gly-414, 478–480, and Asp-494; these read TLGP, DGTTT, and NAA.

It belongs to the chaperonin (HSP60) family. Forms a cylinder of 14 subunits composed of two heptameric rings stacked back-to-back. Interacts with the co-chaperonin GroES.

The protein resides in the cytoplasm. The enzyme catalyses ATP + H2O + a folded polypeptide = ADP + phosphate + an unfolded polypeptide.. Its function is as follows. Together with its co-chaperonin GroES, plays an essential role in assisting protein folding. The GroEL-GroES system forms a nano-cage that allows encapsulation of the non-native substrate proteins and provides a physical environment optimized to promote and accelerate protein folding. The polypeptide is Chaperonin GroEL (Klebsiella pneumoniae).